Consider the following 155-residue polypeptide: V-type proton ATPase 16 kDa proteolipid subunit c (155 aa).

Residues 1-10 (MSESKSGPEY) are Lumenal-facing. Residues 11-33 (ASFFAVMGASAAMVFSALGAAYG) traverse the membrane as a helical segment. At 34–55 (TAKSGTGIAAMSVMRPEQIMKS) the chain is on the cytoplasmic side. A helical membrane pass occupies residues 56-76 (IIPVVMAGIIAIYGLVVAVLI). Topologically, residues 77–92 (ANSLNDDISLYKSFLQ) are lumenal. Residues 93–114 (LGAGLSVGLSGLAAGFAIGIVG) form a helical membrane-spanning segment. Residues 115–131 (DAGVRGTAQQPRLFVGM) lie on the Cytoplasmic side of the membrane. A helical membrane pass occupies residues 132–152 (ILILIFAEVLGLYGLIVALIL). The Lumenal segment spans residues 153 to 155 (STK).

Belongs to the V-ATPase proteolipid subunit family. V-ATPase is a heteromultimeric enzyme made up of two complexes: the ATP-hydrolytic V1 complex and the proton translocation V0 complex. The V1 complex consists of three catalytic AB heterodimers that form a heterohexamer, three peripheral stalks each consisting of EG heterodimers, one central rotor including subunits D and F, and the regulatory subunits C and H. The proton translocation complex V0 consists of the proton transport subunit a, a ring of proteolipid subunits c9c'', rotary subunit d, subunits e and f, and the accessory subunits ATP6AP1/Ac45 and ATP6AP2/PRR. Interacts with the V0 complex V-ATPase subunit a4 ATP6V0A4. Interacts with LASS2. Interacts with RNF182; this interaction leads to ubiquitination and degradation via the proteasome pathway. In terms of assembly, (Microbial infection) Interacts with HTLV-1 accessory protein p12I. Ubiquitinated by RNF182, leading to its degradation via the ubiquitin-proteasome pathway.

Its subcellular location is the cytoplasmic vesicle. The protein localises to the clathrin-coated vesicle membrane. It localises to the secretory vesicle. It is found in the synaptic vesicle membrane. Proton-conducting pore forming subunit of the V0 complex of vacuolar(H+)-ATPase (V-ATPase), a multisubunit enzyme composed of a peripheral complex (V1) that hydrolyzes ATP and a membrane integral complex (V0) that translocates protons. V-ATPase is responsible for acidifying and maintaining the pH of intracellular compartments, and in some cell types, it is targeted to the plasma membrane, where it is responsible for acidifying the extracellular environment. The protein is V-type proton ATPase 16 kDa proteolipid subunit c (ATP6V0C) of Homo sapiens (Human).